Reading from the N-terminus, the 260-residue chain is Triosephosphate isomerase (260 aa).

Position 11–13 (11–13 (NWK)) interacts with substrate. The active-site Electrophile is His-103. Catalysis depends on Glu-175, which acts as the Proton acceptor. Substrate is bound by residues Gly-181, Ser-220, and 241-242 (GG).

This sequence belongs to the triosephosphate isomerase family. In terms of assembly, homodimer.

Its subcellular location is the cytoplasm. The catalysed reaction is D-glyceraldehyde 3-phosphate = dihydroxyacetone phosphate. It functions in the pathway carbohydrate biosynthesis; gluconeogenesis. Its pathway is carbohydrate degradation; glycolysis; D-glyceraldehyde 3-phosphate from glycerone phosphate: step 1/1. Involved in the gluconeogenesis. Catalyzes stereospecifically the conversion of dihydroxyacetone phosphate (DHAP) to D-glyceraldehyde-3-phosphate (G3P). The protein is Triosephosphate isomerase of Shewanella pealeana (strain ATCC 700345 / ANG-SQ1).